Consider the following 226-residue polypeptide: Ribonuclease 3 (226 aa).

Residues 7 to 129 (LPRLCRTLGY…IIGAVYLDAD (123 aa)) form the RNase III domain. Glutamate 42 contributes to the Mg(2+) binding site. Aspartate 46 is a catalytic residue. Mg(2+)-binding residues include aspartate 115 and glutamate 118. The active site involves glutamate 118. Residues 156-226 (DPKTILQEYL…AAQVLELLNK (71 aa)) form the DRBM domain.

Belongs to the ribonuclease III family. Homodimer. It depends on Mg(2+) as a cofactor.

It is found in the cytoplasm. The enzyme catalyses Endonucleolytic cleavage to 5'-phosphomonoester.. Functionally, digests double-stranded RNA. Involved in the processing of primary rRNA transcript to yield the immediate precursors to the large and small rRNAs (23S and 16S). Processes some mRNAs, and tRNAs when they are encoded in the rRNA operon. Processes pre-crRNA and tracrRNA of type II CRISPR loci if present in the organism. This chain is Ribonuclease 3, found in Shewanella frigidimarina (strain NCIMB 400).